Consider the following 299-residue polypeptide: rRNA methyltransferase (299 aa).

The tract at residues 14–53 is disordered; sequence AEKRSGRGRMAAARTTGAQSRKTAQRSGRSEADRRRRVHG. The span at 21–31 shows a compositional bias: low complexity; the sequence is GRMAAARTTGA. 6 residues coordinate S-adenosyl-L-methionine: asparagine 55, leucine 57, glycine 82, glutamate 103, aspartate 128, and asparagine 144.

The protein belongs to the class I-like SAM-binding methyltransferase superfamily. rRNA adenine N(6)-methyltransferase family.

Probable RNA methylase. Confers resistance to carbomycin and several other macrolides, lincomycin and vernamycin B, but not to all macrolide-lincosamide-streptogramin B antibiotics. In Streptomyces thermotolerans, this protein is rRNA methyltransferase (carB).